A 67-amino-acid polypeptide reads, in one-letter code: Conotoxin reg3.8 (67 aa).

An N-terminal signal peptide occupies residues 1–22; the sequence is MMSKLGVLLTICLLLFPLSVLP. Residues 23–50 constitute a propeptide that is removed on maturation; it reads LDGDQLADQPARHAQSAERNARFHPVKR. 3 disulfides stabilise this stretch: Cys51–Cys65, Cys52–Cys63, and Cys57–Cys66. Position 66 is a cysteine amide (Cys66).

The protein belongs to the conotoxin M superfamily. Expressed by the venom duct.

It is found in the secreted. The protein is Conotoxin reg3.8 of Conus regius (Crown cone).